The primary structure comprises 1032 residues: Protein translocase subunit SecA (1032 aa).

Residues Q121, 139–143 (GEGKT), and D570 contribute to the ATP site. The interval 945–975 (TAGGSENATEDAPKPAKRGVGGAARRVSNAA) is disordered. Zn(2+)-binding residues include C994, C996, C1005, and H1006.

This sequence belongs to the SecA family. Monomer and homodimer. Part of the essential Sec protein translocation apparatus which comprises SecA, SecYEG and auxiliary proteins SecDF. Other proteins may also be involved. Requires Zn(2+) as cofactor.

It is found in the cell membrane. Its subcellular location is the cytoplasm. It catalyses the reaction ATP + H2O + cellular proteinSide 1 = ADP + phosphate + cellular proteinSide 2.. Its function is as follows. Part of the Sec protein translocase complex. Interacts with the SecYEG preprotein conducting channel. Has a central role in coupling the hydrolysis of ATP to the transfer of proteins into and across the cell membrane, serving as an ATP-driven molecular motor driving the stepwise translocation of polypeptide chains across the membrane. This Herpetosiphon aurantiacus (strain ATCC 23779 / DSM 785 / 114-95) protein is Protein translocase subunit SecA.